Here is a 138-residue protein sequence, read N- to C-terminus: Basic phospholipase A2 homolog acutohaemolysin (138 aa).

A signal peptide spans 1 to 16 (MRALWIVAVLLVGVEG). Cystine bridges form between C42–C131, C44–C60, C59–C111, C65–C138, C66–C104, C73–C97, and C91–C102. The important for membrane-damaging activities in eukaryotes and bacteria; heparin-binding stretch occupies residues 121–133 (KSFRYHLKPSCKK).

As to quaternary structure, monomer. Expressed by the venom gland.

Its subcellular location is the secreted. In terms of biological role, snake venom phospholipase A2 homolog that lacks enzymatic activity. Is myotoxic. Has a strong indirect hemolytic activity and anticoagulant activity. A model of myotoxic mechanism has been proposed: an apo Lys49-PLA2 is activated by the entrance of a hydrophobic molecule (e.g. fatty acid) at the hydrophobic channel of the protein leading to a reorientation of a monomer. This reorientation causes a transition between 'inactive' to 'active' states, causing alignment of C-terminal and membrane-docking sites (MDoS) side-by-side and putting the membrane-disruption sites (MDiS) in the same plane, exposed to solvent and in a symmetric position for both monomers. The MDoS region stabilizes the toxin on membrane by the interaction of charged residues with phospholipid head groups. Subsequently, the MDiS region destabilizes the membrane with penetration of hydrophobic residues. This insertion causes a disorganization of the membrane, allowing an uncontrolled influx of ions (i.e. calcium and sodium), and eventually triggering irreversible intracellular alterations and cell death. In Deinagkistrodon acutus (Hundred-pace snake), this protein is Basic phospholipase A2 homolog acutohaemolysin.